A 269-amino-acid chain; its full sequence is Formamidopyrimidine-DNA glycosylase (269 aa).

Residue proline 2 is the Schiff-base intermediate with DNA of the active site. Glutamate 3 acts as the Proton donor in catalysis. Lysine 57 (proton donor; for beta-elimination activity) is an active-site residue. 3 residues coordinate DNA: histidine 90, arginine 109, and lysine 150. The FPG-type zinc-finger motif lies at 235 to 269 (QVYGRKGEPCRVCGTPIVATKHAQRATFYCRHCQK). Arginine 259 acts as the Proton donor; for delta-elimination activity in catalysis.

The protein belongs to the FPG family. In terms of assembly, monomer. Zn(2+) is required as a cofactor.

The enzyme catalyses Hydrolysis of DNA containing ring-opened 7-methylguanine residues, releasing 2,6-diamino-4-hydroxy-5-(N-methyl)formamidopyrimidine.. The catalysed reaction is 2'-deoxyribonucleotide-(2'-deoxyribose 5'-phosphate)-2'-deoxyribonucleotide-DNA = a 3'-end 2'-deoxyribonucleotide-(2,3-dehydro-2,3-deoxyribose 5'-phosphate)-DNA + a 5'-end 5'-phospho-2'-deoxyribonucleoside-DNA + H(+). Involved in base excision repair of DNA damaged by oxidation or by mutagenic agents. Acts as a DNA glycosylase that recognizes and removes damaged bases. Has a preference for oxidized purines, such as 7,8-dihydro-8-oxoguanine (8-oxoG). Has AP (apurinic/apyrimidinic) lyase activity and introduces nicks in the DNA strand. Cleaves the DNA backbone by beta-delta elimination to generate a single-strand break at the site of the removed base with both 3'- and 5'-phosphates. This Salmonella choleraesuis (strain SC-B67) protein is Formamidopyrimidine-DNA glycosylase.